The sequence spans 367 residues: uncharacterized protein (367 aa).

Residues valine 8–leucine 28 form a helical membrane-spanning segment.

The protein localises to the membrane. This is an uncharacterized protein from Bradyrhizobium diazoefficiens (strain JCM 10833 / BCRC 13528 / IAM 13628 / NBRC 14792 / USDA 110).